The primary structure comprises 266 residues: Putative hydro-lyase VF_1377 (266 aa).

The protein belongs to the D-glutamate cyclase family.

This Aliivibrio fischeri (strain ATCC 700601 / ES114) (Vibrio fischeri) protein is Putative hydro-lyase VF_1377.